Consider the following 430-residue polypeptide: UPF0597 protein DSY1109 (430 aa).

It belongs to the UPF0597 family.

The protein is UPF0597 protein DSY1109 of Desulfitobacterium hafniense (strain Y51).